A 486-amino-acid polypeptide reads, in one-letter code: Aspartyl/glutamyl-tRNA(Asn/Gln) amidotransferase subunit B (486 aa).

The protein belongs to the GatB/GatE family. GatB subfamily. Heterotrimer of A, B and C subunits.

The catalysed reaction is L-glutamyl-tRNA(Gln) + L-glutamine + ATP + H2O = L-glutaminyl-tRNA(Gln) + L-glutamate + ADP + phosphate + H(+). It carries out the reaction L-aspartyl-tRNA(Asn) + L-glutamine + ATP + H2O = L-asparaginyl-tRNA(Asn) + L-glutamate + ADP + phosphate + 2 H(+). Allows the formation of correctly charged Asn-tRNA(Asn) or Gln-tRNA(Gln) through the transamidation of misacylated Asp-tRNA(Asn) or Glu-tRNA(Gln) in organisms which lack either or both of asparaginyl-tRNA or glutaminyl-tRNA synthetases. The reaction takes place in the presence of glutamine and ATP through an activated phospho-Asp-tRNA(Asn) or phospho-Glu-tRNA(Gln). This Leptospira borgpetersenii serovar Hardjo-bovis (strain L550) protein is Aspartyl/glutamyl-tRNA(Asn/Gln) amidotransferase subunit B.